A 304-amino-acid chain; its full sequence is Acetylglutamate kinase (304 aa).

Residues 77 to 78, Arg-99, and Asn-193 each bind substrate; that span reads GG.

This sequence belongs to the acetylglutamate kinase family. ArgB subfamily.

It localises to the cytoplasm. The catalysed reaction is N-acetyl-L-glutamate + ATP = N-acetyl-L-glutamyl 5-phosphate + ADP. Its pathway is amino-acid biosynthesis; L-arginine biosynthesis; N(2)-acetyl-L-ornithine from L-glutamate: step 2/4. Functionally, catalyzes the ATP-dependent phosphorylation of N-acetyl-L-glutamate. The chain is Acetylglutamate kinase from Chlorobium limicola (strain DSM 245 / NBRC 103803 / 6330).